We begin with the raw amino-acid sequence, 295 residues long: Sulfotransferase 1A1 (295 aa).

Lys-48–Trp-53 serves as a coordination point for 3'-phosphoadenylyl sulfate. Lys-106–His-108 contacts substrate. His-108 serves as the catalytic Proton acceptor. Residues Arg-130, Ser-138, Tyr-193, Thr-227–Met-232, and Phe-255–Gly-259 contribute to the 3'-phosphoadenylyl sulfate site. Position 138 is a phosphoserine (Ser-138).

The protein belongs to the sulfotransferase 1 family. Homodimer. As to expression, distal lung parenchyma.

The protein localises to the cytoplasm. The enzyme catalyses a phenol + 3'-phosphoadenylyl sulfate = an aryl sulfate + adenosine 3',5'-bisphosphate + H(+). It carries out the reaction 17beta-estradiol + 3'-phosphoadenylyl sulfate = 17beta-estradiol 3-sulfate + adenosine 3',5'-bisphosphate + H(+). It catalyses the reaction 4-ethylphenol + 3'-phosphoadenylyl sulfate = 4-ethylphenyl sulfate + adenosine 3',5'-bisphosphate + H(+). The catalysed reaction is 4-nitrophenol + 3'-phosphoadenylyl sulfate = 4-nitrophenyl sulfate + adenosine 3',5'-bisphosphate. The enzyme catalyses dopamine + 3'-phosphoadenylyl sulfate = dopamine 3-O-sulfate + adenosine 3',5'-bisphosphate + H(+). It carries out the reaction dopamine + 3'-phosphoadenylyl sulfate = dopamine 4-O-sulfate + adenosine 3',5'-bisphosphate + H(+). It catalyses the reaction 3,3',5-triiodo-L-thyronine + 3'-phosphoadenylyl sulfate = 3,3',5-triiodo-L-thyronine sulfate + adenosine 3',5'-bisphosphate + H(+). The catalysed reaction is 3,3',5'-triiodo-L-thyronine + 3'-phosphoadenylyl sulfate = 3,3',5'-triiodo-L-thyronine sulfate + adenosine 3',5'-bisphosphate + H(+). The enzyme catalyses 3,3'-diiodo-L-thyronine + 3'-phosphoadenylyl sulfate = 3,3'-diiodo-L-thyronine sulfate + adenosine 3',5'-bisphosphate + H(+). It carries out the reaction L-thyroxine + 3'-phosphoadenylyl sulfate = L-thyroxine sulfate + adenosine 3',5'-bisphosphate + H(+). In terms of biological role, sulfotransferase that utilizes 3'-phospho-5'-adenylyl sulfate (PAPS) as sulfonate donor to catalyze the sulfate conjugation of a wide variety of acceptor molecules bearing a hydroxyl or an amine group. Sulfonation increases the water solubility of most compounds, and therefore their renal excretion, but it can also result in bioactivation to form active metabolites. Displays broad substrate specificity for small phenolic compounds. Plays an important role in the sulfonation of endogenous molecules such as steroid hormones. Mediates also the metabolic activation of carcinogenic N-hydroxyarylamines leading to highly reactive intermediates capable of forming DNA adducts, potentially resulting in mutagenesis. May play a role in gut microbiota-host metabolic interaction. O-sulfonates 4-ethylphenol (4-EP), a dietary tyrosine-derived metabolite produced by gut bacteria. The product 4-EPS crosses the blood-brain barrier and may negatively regulate oligodendrocyte maturation and myelination, affecting the functional connectivity of different brain regions associated with the limbic system. Catalyzes the sulfate conjugation of dopamine. Catalyzes the sulfation of T4 (L-thyroxine/3,5,3',5'-tetraiodothyronine), T3 (3,5,3'-triiodothyronine), rT3 (3,3',5'-triiodothyronine) and 3,3'-T2 (3,3'-diiodothyronine), with a substrate preference of 3,3'-T2 &gt; rT3 &gt; T3 &gt; T4. The polypeptide is Sulfotransferase 1A1 (SULT1A1) (Bos taurus (Bovine)).